The chain runs to 152 residues: Superoxide dismutase [Cu-Zn] (152 aa).

C7 carries the S-palmitoyl cysteine lipid modification. H47, H49, and H64 together coordinate Cu cation. A disulfide bridge connects residues C58 and C146. Residues H64, H72, H81, and D84 each coordinate Zn(2+). A Cu cation-binding site is contributed by H120.

Belongs to the Cu-Zn superoxide dismutase family. In terms of assembly, homodimer. Cu cation is required as a cofactor. Requires Zn(2+) as cofactor.

The protein resides in the cytoplasm. The protein localises to the nucleus. The catalysed reaction is 2 superoxide + 2 H(+) = H2O2 + O2. In terms of biological role, destroys radicals which are normally produced within the cells and which are toxic to biological systems. The sequence is that of Superoxide dismutase [Cu-Zn] (sod1) from Xiphias gladius (Swordfish).